The following is a 322-amino-acid chain: Transcription factor IIIA (322 aa).

C2H2-type zinc fingers lie at residues 12–36 (FVCS…YCKH), 42–64 (FACD…NLSH), 70–95 (YQCL…ERVH), 102–126 (YVCD…KCEH), 132–156 (FECQ…EKVH), 159–184 (YPCA…KAAH), 188–211 (LQCD…LFVH), 218–243 (FKCT…LSFH), and 249–273 (FICP…AVVH). The tract at residues 272–322 (VHDPQKKKLQKKTKRGRKKKLEPKTNVSDDSELPAQLHGLSLNTSTSQNNP) is disordered. A compositionally biased stretch (basic residues) spans 278–292 (KKLQKKTKRGRKKKL). Over residues 312–322 (SLNTSTSQNNP) the composition is skewed to polar residues.

Its subcellular location is the nucleus. Functionally, involved in ribosomal large subunit biogenesis. Interacts with the internal control region (ICR) of approximately 50 bases within the 5S RNA genes, is required for correct transcription of these genes by RNA polymerase III. Also binds the transcribed 5S RNA's. The protein is Transcription factor IIIA (gtf3a) of Ictalurus punctatus (Channel catfish).